The chain runs to 255 residues: MSITKLADKINEAKAEGRLGLIPFLPGGYPNRDQFWKEILELDEHGADVIEIGMPFSDPVADGPVVEAASLKCLEDGINLKWILAGLSEHRAKISAGVLLMGYYNPVLQYGLEEFAKDASAAGVNGLIIADLPYEEGVEFRDLLAKYDIALIPLVGLNTEADRMALYSKGGNGFCYYVSVLGTTGGTATLPEEIKQGLAKAQEVFDIPVALGFGLKEPSQLKELEGLVDAAVFGSALIKHIDSGKSSAEFMKVWK.

Active-site proton acceptor residues include glutamate 51 and aspartate 62.

This sequence belongs to the TrpA family. Tetramer of two alpha and two beta chains.

The catalysed reaction is (1S,2R)-1-C-(indol-3-yl)glycerol 3-phosphate + L-serine = D-glyceraldehyde 3-phosphate + L-tryptophan + H2O. The protein operates within amino-acid biosynthesis; L-tryptophan biosynthesis; L-tryptophan from chorismate: step 5/5. Its function is as follows. The alpha subunit is responsible for the aldol cleavage of indoleglycerol phosphate to indole and glyceraldehyde 3-phosphate. The chain is Tryptophan synthase alpha chain from Maridesulfovibrio salexigens (strain ATCC 14822 / DSM 2638 / NCIMB 8403 / VKM B-1763) (Desulfovibrio salexigens).